We begin with the raw amino-acid sequence, 466 residues long: Asparagine--tRNA ligase (466 aa).

This sequence belongs to the class-II aminoacyl-tRNA synthetase family. As to quaternary structure, homodimer.

The protein resides in the cytoplasm. It catalyses the reaction tRNA(Asn) + L-asparagine + ATP = L-asparaginyl-tRNA(Asn) + AMP + diphosphate + H(+). This is Asparagine--tRNA ligase from Shewanella halifaxensis (strain HAW-EB4).